The sequence spans 43 residues: VTCDLLSLQIKGIAINDSACAAHCLAMRRKGGSCKQGVCVCRN.

Disulfide bonds link Cys3-Cys34, Cys20-Cys39, and Cys24-Cys41.

It belongs to the invertebrate defensin family. Type 1 subfamily. In terms of tissue distribution, hemolymph.

The protein resides in the secreted. Its function is as follows. Shows potent antibacterial activity against Gram-positive bacteria. In Holotrichia diomphalia (Korean black chafer), this protein is Holotricin-1.